The sequence spans 122 residues: Holo-[acyl-carrier-protein] synthase (122 aa).

Residues D8 and E58 each coordinate Mg(2+).

This sequence belongs to the P-Pant transferase superfamily. AcpS family. It depends on Mg(2+) as a cofactor.

The protein resides in the cytoplasm. The catalysed reaction is apo-[ACP] + CoA = holo-[ACP] + adenosine 3',5'-bisphosphate + H(+). In terms of biological role, transfers the 4'-phosphopantetheine moiety from coenzyme A to a Ser of acyl-carrier-protein. In Levilactobacillus brevis (strain ATCC 367 / BCRC 12310 / CIP 105137 / JCM 1170 / LMG 11437 / NCIMB 947 / NCTC 947) (Lactobacillus brevis), this protein is Holo-[acyl-carrier-protein] synthase.